Here is a 201-residue protein sequence, read N- to C-terminus: Holliday junction branch migration complex subunit RuvA (201 aa).

Residues 1–63 (MIASVRGEVL…EDSMTLYGFA (63 aa)) are domain I. Positions 64 to 142 (DTEARDLFGL…LVPVQAGPPG (79 aa)) are domain II. Positions 143 to 153 (STPAVAATPVR) are flexible linker. The segment at 153 to 201 (REQVVEALTGLGFPLKQAEQALDTVLAEQPAADTSTALRAALSLLGKNR) is domain III.

Belongs to the RuvA family. Homotetramer. Forms an RuvA(8)-RuvB(12)-Holliday junction (HJ) complex. HJ DNA is sandwiched between 2 RuvA tetramers; dsDNA enters through RuvA and exits via RuvB. An RuvB hexamer assembles on each DNA strand where it exits the tetramer. Each RuvB hexamer is contacted by two RuvA subunits (via domain III) on 2 adjacent RuvB subunits; this complex drives branch migration. In the full resolvosome a probable DNA-RuvA(4)-RuvB(12)-RuvC(2) complex forms which resolves the HJ.

Its subcellular location is the cytoplasm. Its function is as follows. The RuvA-RuvB-RuvC complex processes Holliday junction (HJ) DNA during genetic recombination and DNA repair, while the RuvA-RuvB complex plays an important role in the rescue of blocked DNA replication forks via replication fork reversal (RFR). RuvA specifically binds to HJ cruciform DNA, conferring on it an open structure. The RuvB hexamer acts as an ATP-dependent pump, pulling dsDNA into and through the RuvAB complex. HJ branch migration allows RuvC to scan DNA until it finds its consensus sequence, where it cleaves and resolves the cruciform DNA. The chain is Holliday junction branch migration complex subunit RuvA from Nocardia farcinica (strain IFM 10152).